The sequence spans 2442 residues: CREB-binding protein (2442 aa).

Disordered regions lie at residues 1–41 (MAEN…NDLP) and 74–179 (LRGG…CMNA). Residue A2 is modified to N-acetylalanine. Polar residues predominate over residues 20–30 (PGFSANDSTDF). Low complexity predominate over residues 80 to 90 (SSINPGIGNVS). S121 bears the Phosphoserine mark. The segment covering 122–131 (PLSQGDSSAP) has biased composition (polar residues). S124 carries the phosphoserine; by ATM modification. Low complexity predominate over residues 136–150 (QAASTSGPTPAASQA). Residues 151-172 (LNPQAQKQVGLATSSPATSQTG) show a composition bias toward polar residues. The residue at position 220 (R220) is an Omega-N-methylarginine. Residues 227-410 (PTPAMQGASS…GKACQVAHCA (184 aa)) are interaction with SRCAP. Residues 266–290 (KMGITGNTSPFGQPFSQAGGQPMGA) form a disordered region. Over residues 270–284 (TGNTSPFGQPFSQAG) the composition is skewed to polar residues. The TAZ-type 1 zinc finger occupies 347–433 (DPEKRKLIQQ…RHDCPVCLPL (87 aa)). Positions 363, 367, 380, 385, 394, 398, 404, 409, 418, 422, 427, and 430 each coordinate Zn(2+). One can recognise a KIX domain in the interval 587-666 (GVRKGWHEHV…KIYKIQKELE (80 aa)). Residues R601 and R625 each carry the asymmetric dimethylarginine modification. At K657 the chain carries N6-acetyllysine. Composition is skewed to polar residues over residues 794-805 (LPQNQFPSSSGA) and 814-823 (PAQTGVSQGQ). The tract at residues 794–1083 (LPQNQFPSSS…STSPSQPRKK (290 aa)) is disordered. Composition is skewed to pro residues over residues 844–860 (PCPPVTQSPLHPTPPPA) and 876–885 (GMTPPQPAAP). 2 stretches are compositionally biased toward low complexity: residues 886–929 (TQPS…VTPQ) and 937–952 (PSVATPQSSQQQPTPV). Positions 973–988 (PTPSSVASAETNSQQP) are enriched in polar residues. K998 is covalently cross-linked (Glycyl lysine isopeptide (Lys-Gly) (interchain with G-Cter in SUMO1)). A compositionally biased stretch (basic and acidic residues) spans 1011–1021 (GESKGEPRSEM). K1014 carries the post-translational modification N6-acetyllysine. S1030 carries the post-translational modification Phosphoserine. Residues 1032 to 1059 (VKEETDIAEQKSEPMEVDEKKPEVKVEV) show a composition bias toward basic and acidic residues. Residues K1033 and K1056 each participate in a glycyl lysine isopeptide (Lys-Gly) (interchain with G-Cter in SUMO1) cross-link. Positions 1066-1078 (SSNGTASQSTSPS) are enriched in low complexity. A Phosphoserine modification is found at S1076. Positions 1085 to 1192 (FKPEELRQAL…EVFEQEIDPV (108 aa)) constitute a Bromo domain. Residues 1124 to 1170 (DYFDIVKNPMDLSTIKRKLDTGQYQEPWQYVDDVWLMFNNAWLYNRK) form an interaction with histone region. The tract at residues 1162–1180 (NNAWLYNRKTSRVYKFCSK) is interaction with ASF1A. N6-acetyllysine is present on K1216. The 378-residue stretch at 1323 to 1700 (KFSAKRLQTT…MLVELHTQGQ (378 aa)) folds into the CBP/p300-type HAT domain. Phosphoserine; by IKKA occurs at positions 1382 and 1386. Positions 1433 to 1435 (YLD) are interaction with histone. Residues 1434–1436 (LDS), 1446–1447 (RT), I1493, R1498, and W1502 each bind acetyl-CoA. Residues 1460 to 1891 (YVKKLGYVTG…LPSPTSAPPG (432 aa)) are interaction with TRERF1. Basic and acidic residues predominate over residues 1556 to 1568 (LEQEEEERKKEES). A disordered region spans residues 1556-1615 (LEQEEEERKKEESTAASETTEGSQGDSKNAKKKNNKKTNKNKSSISRANKKKPSMPNVSN). Residues K1583, K1591, K1592, K1595, and K1597 each carry the N6-acetyllysine modification. Residues 1585–1595 (AKKKNNKKTNK) show a composition bias toward basic residues. The ZZ-type zinc-finger motif lies at 1702–1750 (RFVYTCNECKHHVETRWHCTVCEDYDLCINCYNTKSHAHKMVKWGLGLD). Residues C1707, C1710, C1720, C1723, C1729, C1732, H1738, and H1740 each coordinate Zn(2+). K1741 and K1744 each carry N6-acetyllysine. Residue S1763 is modified to Phosphoserine. The TAZ-type 2 zinc-finger motif lies at 1765 to 1846 (QESRRLSIQR…KCPVPFCLNI (82 aa)). 2 disordered regions span residues 1874 to 1959 (TRNV…VEAA) and 1977 to 2028 (INNS…PLPQ). A compositionally biased stretch (pro residues) spans 1900 to 1912 (PQTPQPPAQPQPS). Residues 1925-1940 (ARTQPPTTVSTGKPTS) are compositionally biased toward polar residues. Over residues 1943-1954 (PAPPPPAQPPPA) the composition is skewed to pro residues. Low complexity predominate over residues 2018–2027 (PGQWQQAPLP). Phosphoserine is present on residues S2063, S2076, and S2079. Composition is skewed to low complexity over residues 2112–2137 (QPGMQPQPGLQSQPGMQPQPGMHQQP), 2146–2160 (QAGVPRPGVPPQQQA), 2196–2219 (QLLQQQQQQQQQQQQQQQQQQGSA), 2228–2263 (HGQFQQPQGPGGYPPAMQQQQRMQQHLPLQGSSMGQ), and 2294–2305 (RILQQQQMKQQI). Disordered regions lie at residues 2112–2263 (QPGM…SMGQ) and 2294–2433 (RILQ…TTGD). 2 stretches are compositionally biased toward polar residues: residues 2315 to 2327 (SPQQHMLSGQPQA) and 2334 to 2343 (QIATSLSNQV). The span at 2349–2372 (VQSPRPQSQPPHSSPSPRIQPQPS) shows a compositional bias: pro residues. Phosphoserine is present on S2351. Over residues 2411 to 2424 (QLNTPSRSALSSEL) the composition is skewed to polar residues.

In terms of assembly, found in a complex containing NCOA2; NCOA3; IKKA; IKKB and IKBKG. Probably part of a complex with HIF1A and EP300. Interacts with GATA1; the interaction results in acetylation and enhancement of transcriptional activity of GATA1. Interacts with MAF and ZCCHC12. Interacts with DAXX; the interaction is dependent on CBP sumoylation and results in suppression of the transcriptional activity via recruitment of HDAC2 to DAXX. Interacts with phosphorylated CREB1. Interacts with CITED4 (C-terminal region). Interacts (via the TAZ-type 1 domain) with HIF1A. Interacts with SRCAP, CARM1, ELF3, MLLT7/FOXO4, N4BP2, NCOA1, NCOA3, NCOA6, PCAF, DDX5, DDX17, PELP1, PML, SMAD1, SMAD2, SMAD3, SPIB and TRERF1. Interacts with KLF1; the interaction results in acetylation of KLF1 and enhancement of its transcriptional activity. Interacts with MTDH. Interacts with NFATC4. Interacts with MAFG; the interaction acetylates MAFG in the basic region and stimulates NFE2 transcriptional activity through increasing its DNA-binding activity. Interacts with IRF2; the interaction acetylates IRF2 and regulates its activity on the H4 promoter. Interacts with IRF3 (when phosphorylated); forming the dsRNA-activated factor 1 (DRAF1), a complex which activates the transcription of the type I interferon genes. Interacts (via N-terminus) with SS18L1/CREST (via C-terminus). Interacts with MECOM. Interacts with CITED1 (via C-terminus). Interacts with FOXO1; the interaction acetylates FOXO1 and inhibits its transcriptional activity. Interacts with NPAS2, CLOCK and BMAL1. Interacts with ASF1A and ASF1B; this promotes histone acetylation. Interacts with acetylated TP53/p53 and with the acetylated histones H3 and H4. Interacts (via transactivation domain and C-terminus) with PCNA; the interaction occurs on chromatin in UV-irradiated damaged cells. Interacts with DHX9 (via N-terminus); this interaction mediates association with RNA polymerase II holoenzyme and stimulates CREB-dependent transcriptional activation. Interacts with SMAD4; negatively regulated by ZBTB7A. Interacts with DUX4 (via C-terminus). Forms a complex with KMT2A and CREB1. Interacts with DDX3X; this interaction may facilitate HNF4A acetylation. Interacts with MSX1; the interaction may inhibit MSX1 autoinactivation. Interacts with ACSS2. (Microbial infection) Interacts with HTLV-1 Tax, p30II and HBZ. As to quaternary structure, (Microbial infection) Interacts with human herpes virus 8/HHV-8 protein vIRF-1; this interaction inhibits CREBBP binding to IRF3. In terms of assembly, (Microbial infection) Interacts with HIV-1 Tat. Post-translationally, methylation of the KIX domain by CARM1 blocks association with CREB. This results in the blockade of CREB signaling, and in activation of apoptotic response. In terms of processing, phosphorylated by CHUK/IKKA at Ser-1382 and Ser-1386; these phosphorylations promote cell growth by switching the binding preference of CREBBP from TP53 to NF-kappa-B. Phosphorylated by _ at Ser-124 in response to DNA damage, promoting interaction with MRE11 and lactylation of MRE11. Sumoylation negatively regulates transcriptional activity via the recruitment of DAAX. Post-translationally, autoacetylation is required for binding to protein substrates, such as acetylated histones and acetylated TP53/p53. Autoacetylation is induced by glucose and fatty acids.

It localises to the cytoplasm. The protein localises to the nucleus. The catalysed reaction is L-lysyl-[histone] + acetyl-CoA = N(6)-acetyl-L-lysyl-[histone] + CoA + H(+). The enzyme catalyses L-lysyl-[protein] + acetyl-CoA = N(6)-acetyl-L-lysyl-[protein] + CoA + H(+). It catalyses the reaction (S)-lactoyl-CoA + L-lysyl-[protein] = N(6)-[(S)-lactoyl]-L-lysyl-[protein] + CoA + H(+). In terms of biological role, acetylates histones, giving a specific tag for transcriptional activation. Mediates acetylation of histone H3 at 'Lys-18' and 'Lys-27' (H3K18ac and H3K27ac, respectively). Also acetylates non-histone proteins, like DDX21, FBL, IRF2, MAFG, NCOA3, POLR1E/PAF53 and FOXO1. Binds specifically to phosphorylated CREB and enhances its transcriptional activity toward cAMP-responsive genes. Acts as a coactivator of ALX1. Acts as a circadian transcriptional coactivator which enhances the activity of the circadian transcriptional activators: NPAS2-BMAL1 and CLOCK-BMAL1 heterodimers. Acetylates PCNA; acetylation promotes removal of chromatin-bound PCNA and its degradation during nucleotide excision repair (NER). Acetylates POLR1E/PAF53, leading to decreased association of RNA polymerase I with the rDNA promoter region and coding region. Acetylates DDX21, thereby inhibiting DDX21 helicase activity. Acetylates FBL, preventing methylation of 'Gln-105' of histone H2A (H2AQ104me). In addition to protein acetyltransferase, can use different acyl-CoA substrates, such as lactoyl-CoA, and is able to mediate protein lactylation. Catalyzes lactylation of MRE11 in response to DNA damage, thereby promoting DNA double-strand breaks (DSBs) via homologous recombination (HR). Functions as a transcriptional coactivator for SMAD4 in the TGF-beta signaling pathway. In Homo sapiens (Human), this protein is CREB-binding protein.